The primary structure comprises 126 residues: Large ribosomal subunit protein bL12 (126 aa).

Belongs to the bacterial ribosomal protein bL12 family. As to quaternary structure, homodimer. Part of the ribosomal stalk of the 50S ribosomal subunit. Forms a multimeric L10(L12)X complex, where L10 forms an elongated spine to which 2 to 4 L12 dimers bind in a sequential fashion. Binds GTP-bound translation factors.

Forms part of the ribosomal stalk which helps the ribosome interact with GTP-bound translation factors. Is thus essential for accurate translation. In Paracidovorax citrulli (strain AAC00-1) (Acidovorax citrulli), this protein is Large ribosomal subunit protein bL12.